A 204-amino-acid chain; its full sequence is Large ribosomal subunit protein eL15 (204 aa).

The protein belongs to the eukaryotic ribosomal protein eL15 family.

This Chironomus tentans (Midge) protein is Large ribosomal subunit protein eL15 (RpL15).